The sequence spans 460 residues: DNA repair protein RAD57 (460 aa).

125 to 132 (GESSTGKS) is a binding site for ATP.

It belongs to the RecA family.

The protein resides in the nucleus. Its function is as follows. Participates in the repair of X-ray-induced damage to DNA and in meiosis. It may act in part by stabilizing a repair complex of other RAD genes. This Saccharomyces cerevisiae (strain ATCC 204508 / S288c) (Baker's yeast) protein is DNA repair protein RAD57 (RAD57).